Here is a 290-residue protein sequence, read N- to C-terminus: Acetyl-coenzyme A carboxylase carboxyl transferase subunit beta (290 aa).

Positions 28–290 (IMTKCPKCKK…TGGDIEWLQD (263 aa)) constitute a CoA carboxyltransferase N-terminal domain. Residues Cys32, Cys35, Cys51, and Cys54 each contribute to the Zn(2+) site. Residues 32–54 (CPKCKKIMLTKELDKNMRVCMNC) form a C4-type zinc finger.

It belongs to the AccD/PCCB family. As to quaternary structure, acetyl-CoA carboxylase is a heterohexamer composed of biotin carboxyl carrier protein (AccB), biotin carboxylase (AccC) and two subunits each of ACCase subunit alpha (AccA) and ACCase subunit beta (AccD). Zn(2+) is required as a cofactor.

Its subcellular location is the cytoplasm. The enzyme catalyses N(6)-carboxybiotinyl-L-lysyl-[protein] + acetyl-CoA = N(6)-biotinyl-L-lysyl-[protein] + malonyl-CoA. The protein operates within lipid metabolism; malonyl-CoA biosynthesis; malonyl-CoA from acetyl-CoA: step 1/1. With respect to regulation, inhibited by pyrrolidine dione antibiotics moiramide B (CPD1) and CPD2. In terms of biological role, component of the acetyl coenzyme A carboxylase (ACC) complex. Biotin carboxylase (BC) catalyzes the carboxylation of biotin on its carrier protein (BCCP) and then the CO(2) group is transferred by the transcarboxylase to acetyl-CoA to form malonyl-CoA. The protein is Acetyl-coenzyme A carboxylase carboxyl transferase subunit beta of Bacillus subtilis (strain 168).